The chain runs to 301 residues: Phosphatidylglycerol--prolipoprotein diacylglyceryl transferase (301 aa).

7 helical membrane passes run 17–37 (LAVRWYGLMYLVAFIMAIVVG), 59–79 (MLFYGVLGTILGGRFGYVLFY), 97–117 (GGMSFHGGFLGVTFAMILFAW), 129–149 (FVAPMVPAGLAAGRLGNFING), 203–223 (PSQLYEIALEGVVLFLVLWLF), 230–250 (VGAASAVFLIGYGLARFTVEF), and 257–277 (FLGLLALGLSMGQWLSLPMII). Arg-142 is an a 1,2-diacyl-sn-glycero-3-phospho-(1'-sn-glycerol) binding site.

This sequence belongs to the Lgt family.

It is found in the cell inner membrane. It carries out the reaction L-cysteinyl-[prolipoprotein] + a 1,2-diacyl-sn-glycero-3-phospho-(1'-sn-glycerol) = an S-1,2-diacyl-sn-glyceryl-L-cysteinyl-[prolipoprotein] + sn-glycerol 1-phosphate + H(+). Its pathway is protein modification; lipoprotein biosynthesis (diacylglyceryl transfer). In terms of biological role, catalyzes the transfer of the diacylglyceryl group from phosphatidylglycerol to the sulfhydryl group of the N-terminal cysteine of a prolipoprotein, the first step in the formation of mature lipoproteins. This is Phosphatidylglycerol--prolipoprotein diacylglyceryl transferase from Paraburkholderia phymatum (strain DSM 17167 / CIP 108236 / LMG 21445 / STM815) (Burkholderia phymatum).